A 334-amino-acid polypeptide reads, in one-letter code: GTP 3',8-cyclase (334 aa).

In terms of domain architecture, Radical SAM core spans arginine 13 to alanine 239. Arginine 22 provides a ligand contact to GTP. Residues cysteine 29 and cysteine 33 each contribute to the [4Fe-4S] cluster site. Tyrosine 35 contacts S-adenosyl-L-methionine. Position 36 (cysteine 36) interacts with [4Fe-4S] cluster. Arginine 73 lines the GTP pocket. An S-adenosyl-L-methionine-binding site is contributed by glycine 77. Residue threonine 104 coordinates GTP. Residue serine 128 participates in S-adenosyl-L-methionine binding. Lysine 165 contributes to the GTP binding site. Methionine 199 serves as a coordination point for S-adenosyl-L-methionine. [4Fe-4S] cluster is bound by residues cysteine 262 and cysteine 265. Residue arginine 267–arginine 269 participates in GTP binding. Position 279 (cysteine 279) interacts with [4Fe-4S] cluster.

This sequence belongs to the radical SAM superfamily. MoaA family. Monomer and homodimer. The cofactor is [4Fe-4S] cluster.

It catalyses the reaction GTP + AH2 + S-adenosyl-L-methionine = (8S)-3',8-cyclo-7,8-dihydroguanosine 5'-triphosphate + 5'-deoxyadenosine + L-methionine + A + H(+). The protein operates within cofactor biosynthesis; molybdopterin biosynthesis. Functionally, catalyzes the cyclization of GTP to (8S)-3',8-cyclo-7,8-dihydroguanosine 5'-triphosphate. This chain is GTP 3',8-cyclase, found in Vibrio vulnificus (strain CMCP6).